The following is a 283-amino-acid chain: Elongation factor Ts (283 aa).

The involved in Mg(2+) ion dislocation from EF-Tu stretch occupies residues 80-83 (TDFV).

The protein belongs to the EF-Ts family.

It localises to the cytoplasm. Functionally, associates with the EF-Tu.GDP complex and induces the exchange of GDP to GTP. It remains bound to the aminoacyl-tRNA.EF-Tu.GTP complex up to the GTP hydrolysis stage on the ribosome. In Shigella boydii serotype 18 (strain CDC 3083-94 / BS512), this protein is Elongation factor Ts.